The following is a 547-amino-acid chain: CTP synthase (547 aa).

Residues 1–265 (MARYVFITGG…DQAVLDAFGI (265 aa)) are amidoligase domain. CTP is bound at residue Ser-13. Ser-13 contributes to the UTP binding site. Residues 14–19 (SLGKGL) and Asp-71 each bind ATP. Mg(2+)-binding residues include Asp-71 and Glu-139. CTP contacts are provided by residues 146 to 148 (DIE), 186 to 191 (KTKPTQ), and Lys-222. UTP-binding positions include 186-191 (KTKPTQ) and Lys-222. Residues 291 to 546 (RVAIVGKYTQ…IRAAVEVSRL (256 aa)) form the Glutamine amidotransferase type-1 domain. Gly-353 provides a ligand contact to L-glutamine. Residue Cys-380 is the Nucleophile; for glutamine hydrolysis of the active site. L-glutamine-binding positions include 381 to 384 (LGMQ), Glu-404, and Arg-474. Catalysis depends on residues His-519 and Glu-521.

This sequence belongs to the CTP synthase family. Homotetramer.

The catalysed reaction is UTP + L-glutamine + ATP + H2O = CTP + L-glutamate + ADP + phosphate + 2 H(+). It carries out the reaction L-glutamine + H2O = L-glutamate + NH4(+). The enzyme catalyses UTP + NH4(+) + ATP = CTP + ADP + phosphate + 2 H(+). Its pathway is pyrimidine metabolism; CTP biosynthesis via de novo pathway; CTP from UDP: step 2/2. Allosterically activated by GTP, when glutamine is the substrate; GTP has no effect on the reaction when ammonia is the substrate. The allosteric effector GTP functions by stabilizing the protein conformation that binds the tetrahedral intermediate(s) formed during glutamine hydrolysis. Inhibited by the product CTP, via allosteric rather than competitive inhibition. Its function is as follows. Catalyzes the ATP-dependent amination of UTP to CTP with either L-glutamine or ammonia as the source of nitrogen. Regulates intracellular CTP levels through interactions with the four ribonucleotide triphosphates. The protein is CTP synthase of Cereibacter sphaeroides (strain ATCC 17025 / ATH 2.4.3) (Rhodobacter sphaeroides).